The primary structure comprises 719 residues: Fatty acid oxidation complex subunit alpha (719 aa).

An enoyl-CoA hydratase/isomerase region spans residues 1–190 (MIYQGNRITV…KLGLVDAVVA (190 aa)). A substrate-binding site is contributed by D298. The interval 313-719 (HDINEAAVLG…AAGETFYPKA (407 aa)) is 3-hydroxyacyl-CoA dehydrogenase. NAD(+) is bound by residues M326, D345, 402-404 (VVE), K409, and S431. H452 (for 3-hydroxyacyl-CoA dehydrogenase activity) is an active-site residue. NAD(+) is bound at residue N455. N502 contacts substrate.

This sequence in the N-terminal section; belongs to the enoyl-CoA hydratase/isomerase family. In the C-terminal section; belongs to the 3-hydroxyacyl-CoA dehydrogenase family. As to quaternary structure, heterotetramer of two alpha chains (FadB) and two beta chains (FadA).

The enzyme catalyses a (3S)-3-hydroxyacyl-CoA + NAD(+) = a 3-oxoacyl-CoA + NADH + H(+). It carries out the reaction a (3S)-3-hydroxyacyl-CoA = a (2E)-enoyl-CoA + H2O. It catalyses the reaction a 4-saturated-(3S)-3-hydroxyacyl-CoA = a (3E)-enoyl-CoA + H2O. The catalysed reaction is (3S)-3-hydroxybutanoyl-CoA = (3R)-3-hydroxybutanoyl-CoA. The enzyme catalyses a (3Z)-enoyl-CoA = a 4-saturated (2E)-enoyl-CoA. It carries out the reaction a (3E)-enoyl-CoA = a 4-saturated (2E)-enoyl-CoA. The protein operates within lipid metabolism; fatty acid beta-oxidation. In terms of biological role, involved in the aerobic and anaerobic degradation of long-chain fatty acids via beta-oxidation cycle. Catalyzes the formation of 3-oxoacyl-CoA from enoyl-CoA via L-3-hydroxyacyl-CoA. It can also use D-3-hydroxyacyl-CoA and cis-3-enoyl-CoA as substrate. In Psychrobacter sp. (strain PRwf-1), this protein is Fatty acid oxidation complex subunit alpha.